The chain runs to 746 residues: Protein O-mannosyl-transferase 1 (746 aa).

Helical transmembrane passes span 30 to 50, 90 to 110, 121 to 141, 144 to 164, 176 to 196, 228 to 248, and 266 to 286; these read PLVV…LGLL, FGHM…NFLW, VPIW…VPMA, IVLE…LMLI, LLES…LKFF, MGIF…WNLI, and IVAL…VHLM. 3 consecutive MIR domains span residues 318–381, 392–449, and 453–513; these read PLEV…VKDP, PRPV…LDIV, and SNRD…VEEH. Residues asparagine 435, asparagine 471, and asparagine 539 are each glycosylated (N-linked (GlcNAc...) asparagine). A run of 3 helical transmembrane segments spans residues 597–617, 636–656, and 660–680; these read IVIW…FFWY, WVLA…PFFL, and VLFL…LPIV.

It belongs to the glycosyltransferase 39 family.

The protein resides in the endoplasmic reticulum membrane. It carries out the reaction a di-trans,poly-cis-dolichyl beta-D-mannosyl phosphate + L-seryl-[protein] = 3-O-(alpha-D-mannosyl)-L-seryl-[protein] + a di-trans,poly-cis-dolichyl phosphate + H(+). The enzyme catalyses a di-trans,poly-cis-dolichyl beta-D-mannosyl phosphate + L-threonyl-[protein] = 3-O-(alpha-D-mannosyl)-L-threonyl-[protein] + a di-trans,poly-cis-dolichyl phosphate + H(+). It participates in protein modification; protein glycosylation. Transfers mannosyl residues to the hydroxyl group of serine or threonine residues. Coexpression of both POMT1 and POMT2 is necessary for enzyme activity, expression of either POMT1 or POMT2 alone is insufficient. Essentially dedicated to O-mannosylation of alpha-DAG1 and few other proteins but not of cadherins and protocaherins. The protein is Protein O-mannosyl-transferase 1 (Pomt1) of Mus musculus (Mouse).